Consider the following 275-residue polypeptide: Large ribosomal subunit protein uL2 (275 aa).

The segment at 212-259 is disordered; the sequence is RWKGIRPTNRGVTMNPVDHPHGGGEGKTSGGRHPVTPWGQPTRGYKTR.

It belongs to the universal ribosomal protein uL2 family. Part of the 50S ribosomal subunit. Forms a bridge to the 30S subunit in the 70S ribosome.

Its function is as follows. One of the primary rRNA binding proteins. Required for association of the 30S and 50S subunits to form the 70S ribosome, for tRNA binding and peptide bond formation. It has been suggested to have peptidyltransferase activity; this is somewhat controversial. Makes several contacts with the 16S rRNA in the 70S ribosome. This chain is Large ribosomal subunit protein uL2, found in Acidobacterium capsulatum (strain ATCC 51196 / DSM 11244 / BCRC 80197 / JCM 7670 / NBRC 15755 / NCIMB 13165 / 161).